The following is a 156-amino-acid chain: Cyclin-dependent protein kinase inhibitor SMR10 (156 aa).

The segment at 52–90 (QDQDLEPKSQETNNCSRKEGATVKKEEEEEDDYCKTPTR) is disordered. The segment covering 67 to 77 (SRKEGATVKKE) has biased composition (basic and acidic residues).

In terms of biological role, probable cyclin-dependent protein kinase (CDK) inhibitor that functions as a repressor of mitosis in the endoreduplication cell cycle. This chain is Cyclin-dependent protein kinase inhibitor SMR10, found in Arabidopsis thaliana (Mouse-ear cress).